The following is a 213-amino-acid chain: ATP synthase peripheral stalk subunit OSCP, mitochondrial (213 aa).

Residues 1–23 (MAAPAVSGFSRQVRCFSTSVVRP) constitute a mitochondrion transit peptide. The SIFI-degron motif lies at 5 to 23 (AVSGFSRQVRCFSTSVVRP). Residues Lys54, Lys60, Lys70, and Lys73 each carry the N6-acetyllysine modification. The residue at position 90 (Lys90) is an N6-succinyllysine. N6-acetyllysine; alternate occurs at positions 100 and 158. N6-succinyllysine; alternate is present on residues Lys100 and Lys158. Residues Lys172, Lys176, and Lys192 each carry the N6-acetyllysine modification. At Lys199 the chain carries N6-succinyllysine.

It belongs to the ATPase delta chain family. As to quaternary structure, component of the ATP synthase complex composed at least of ATP5F1A/subunit alpha, ATP5F1B/subunit beta, ATP5MC1/subunit c (homooctomer), MT-ATP6/subunit a, MT-ATP8/subunit 8, ATP5ME/subunit e, ATP5MF/subunit f, ATP5MG/subunit g, ATP5MK/subunit k, ATP5MJ/subunit j, ATP5F1C/subunit gamma, ATP5F1D/subunit delta, ATP5F1E/subunit epsilon, ATP5PF/subunit F6, ATP5PB/subunit b, ATP5PD/subunit d, ATP5PO/subunit OSCP. ATP synthase complex consists of a soluble F(1) head domain (subunits alpha(3) and beta(3)) - the catalytic core - and a membrane F(0) domain - the membrane proton channel (subunits c, a, 8, e, f, g, k and j). These two domains are linked by a central stalk (subunits gamma, delta, and epsilon) rotating inside the F1 region and a stationary peripheral stalk (subunits F6, b, d, and OSCP). Post-translationally, in response to mitochondrial stress, the precursor protein is ubiquitinated by the SIFI complex in the cytoplasm before mitochondrial import, leading to its degradation. Within the SIFI complex, UBR4 initiates ubiquitin chain that are further elongated or branched by KCMF1.

It localises to the mitochondrion. The protein resides in the mitochondrion inner membrane. Its function is as follows. Subunit OSCP, of the mitochondrial membrane ATP synthase complex (F(1)F(0) ATP synthase or Complex V) that produces ATP from ADP in the presence of a proton gradient across the membrane which is generated by electron transport complexes of the respiratory chain. ATP synthase complex consist of a soluble F(1) head domain - the catalytic core - and a membrane F(1) domain - the membrane proton channel. These two domains are linked by a central stalk rotating inside the F(1) region and a stationary peripheral stalk. During catalysis, ATP synthesis in the catalytic domain of F(1) is coupled via a rotary mechanism of the central stalk subunits to proton translocation. In vivo, can only synthesize ATP although its ATP hydrolase activity can be activated artificially in vitro. Part of the complex F(0) domain. Part of the complex F(0) domain and the peripheric stalk, which acts as a stator to hold the catalytic alpha(3)beta(3) subcomplex and subunit a/ATP6 static relative to the rotary elements. This chain is ATP synthase peripheral stalk subunit OSCP, mitochondrial, found in Rhinolophus ferrumequinum (Greater horseshoe bat).